The primary structure comprises 145 residues: 3-hydroxyacyl-[acyl-carrier-protein] dehydratase FabZ (145 aa).

The active site involves His-47.

Belongs to the thioester dehydratase family. FabZ subfamily.

Its subcellular location is the cytoplasm. It catalyses the reaction a (3R)-hydroxyacyl-[ACP] = a (2E)-enoyl-[ACP] + H2O. Its function is as follows. Involved in unsaturated fatty acids biosynthesis. Catalyzes the dehydration of short chain beta-hydroxyacyl-ACPs and long chain saturated and unsaturated beta-hydroxyacyl-ACPs. This Methylobacillus flagellatus (strain ATCC 51484 / DSM 6875 / VKM B-1610 / KT) protein is 3-hydroxyacyl-[acyl-carrier-protein] dehydratase FabZ.